The sequence spans 366 residues: MTSKINKIVNGPIPDSFLFDESKRLDSLKFDGTNLEVLDQLLLPHEFKYIPVEGVSDAFAVIKSMQVRGAPLIAVVGSLGLLLEIQKASELDSESIIQKINFLISSRPTAVDLRNSLNGLKPILESQDYSDVVKLEKCRSYLLNVYTDEKLQNRILVWNAYQELLSAFPDKEKLTVMTICNTGSLATISWGTALGVIRALHSENRLKLVYVLETRPYNQGIRLTSIELLHGEVPFKLITDSMAAWAMKNHQVDCVLTGADNVARNGDTANKIGTYMLAVLCKHHNINFYPVVPFTTINKNIATGEEIKIEERPSAEMLRVNGVLIGNSECPVWNPAFDVTPAHLITKILTDFGNWPPEMLEQQIPK.

Asp260 serves as the catalytic Proton donor.

Belongs to the eIF-2B alpha/beta/delta subunits family. MtnA subfamily.

It localises to the cytoplasm. It is found in the nucleus. It carries out the reaction 5-(methylsulfanyl)-alpha-D-ribose 1-phosphate = 5-(methylsulfanyl)-D-ribulose 1-phosphate. The protein operates within amino-acid biosynthesis; L-methionine biosynthesis via salvage pathway; L-methionine from S-methyl-5-thio-alpha-D-ribose 1-phosphate: step 1/6. Functionally, catalyzes the interconversion of methylthioribose-1-phosphate (MTR-1-P) into methylthioribulose-1-phosphate (MTRu-1-P). This Caenorhabditis elegans protein is Methylthioribose-1-phosphate isomerase.